The primary structure comprises 130 residues: Fluoride-specific ion channel FluC (130 aa).

Transmembrane regions (helical) follow at residues 1–21 (MGEI…RYGL), 36–56 (GTLI…QWGF), 65–85 (LKLM…TFSY), and 103–123 (ILAN…LGSL). 2 residues coordinate Na(+): G75 and T78.

It belongs to the fluoride channel Fluc/FEX (TC 1.A.43) family.

It localises to the cell membrane. The enzyme catalyses fluoride(in) = fluoride(out). Na(+) is not transported, but it plays an essential structural role and its presence is essential for fluoride channel function. Fluoride-specific ion channel. Important for reducing fluoride concentration in the cell, thus reducing its toxicity. The chain is Fluoride-specific ion channel FluC from Dehalococcoides mccartyi (strain ATCC BAA-2266 / KCTC 15142 / 195) (Dehalococcoides ethenogenes (strain 195)).